We begin with the raw amino-acid sequence, 146 residues long: Hemoglobin subunit beta (146 aa).

The residue at position 1 (valine 1) is an N-acetylvaline. The Globin domain occupies 2–146; the sequence is HLTNEEKTAV…VATALAHKYH (145 aa). Serine 44 carries the post-translational modification Phosphoserine. Lysine 59 is modified (N6-acetyllysine). Residue histidine 63 coordinates heme b. At lysine 82 the chain carries N6-acetyllysine. Residue histidine 92 participates in heme b binding. Cysteine 93 carries the post-translational modification S-nitrosocysteine. N6-acetyllysine is present on lysine 144.

Belongs to the globin family. Heterotetramer of two alpha chains and two beta chains. As to expression, red blood cells.

Functionally, involved in oxygen transport from the lung to the various peripheral tissues. The chain is Hemoglobin subunit beta (HBB) from Lyroderma lyra (Greater Asian false-vampire bat).